The sequence spans 453 residues: Aspartic proteinase PCS1 (453 aa).

An N-terminal signal peptide occupies residues 1 to 18 (MFSRFHALFLLLVLSVRT). Positions 19–57 (YKCVSSSSSSSSSFSFSSFSSSSSSQTLVLPLKTRITPT) are cleaved as a propeptide — activation peptide. N-linked (GlcNAc...) asparagine glycans are attached at residues N70 and N85. Residues 73-438 (LTVTLTVGTP…DLQRSRIGLA (366 aa)) enclose the Peptidase A1 domain. D91 is a catalytic residue. 4 N-linked (GlcNAc...) asparagine glycosylation sites follow: N102, N175, N178, and N243. D304 is an active-site residue. Residues N326 and N395 are each glycosylated (N-linked (GlcNAc...) asparagine).

This sequence belongs to the peptidase A1 family. In terms of tissue distribution, expressed specifically in developing gametophytes and developing seeds.

The protein resides in the endoplasmic reticulum. Embryo-specific aspartic protease that limits programmed cell death during reproductive development. Possesses peptidase activity toward casein in vitro. The chain is Aspartic proteinase PCS1 (PCS1) from Arabidopsis thaliana (Mouse-ear cress).